Here is a 150-residue protein sequence, read N- to C-terminus: Large ribosomal subunit protein uL13 (150 aa).

A disordered region spans residues Glu130 to Lys150. Residues Ser134–Lys150 show a composition bias toward polar residues.

Belongs to the universal ribosomal protein uL13 family. Part of the 50S ribosomal subunit.

Its function is as follows. This protein is one of the early assembly proteins of the 50S ribosomal subunit, although it is not seen to bind rRNA by itself. It is important during the early stages of 50S assembly. The sequence is that of Large ribosomal subunit protein uL13 from Prochlorococcus marinus (strain SARG / CCMP1375 / SS120).